The chain runs to 437 residues: Selenocysteine lyase (437 aa).

M1 bears the N-acetylmethionine mark. The interval 1 to 30 is disordered; sequence MEAAGARNRDARSRAEKSPPESRKVYMDYN. Over residues 7-26 the composition is skewed to basic and acidic residues; the sequence is RNRDARSRAEKSPPESRKVY. At K252 the chain carries N6-(pyridoxal phosphate)lysine. The S-selanylcysteine intermediate role is filled by C380.

This sequence belongs to the class-V pyridoxal-phosphate-dependent aminotransferase family. As to quaternary structure, homodimer. Requires pyridoxal 5'-phosphate as cofactor.

The protein resides in the cytoplasm. It is found in the cytosol. The catalysed reaction is L-selenocysteine + AH2 = hydrogenselenide + L-alanine + A + H(+). In terms of biological role, catalyzes the decomposition of L-selenocysteine to L-alanine and elemental selenium. The polypeptide is Selenocysteine lyase (SCLY) (Bos taurus (Bovine)).